We begin with the raw amino-acid sequence, 102 residues long: Small ribosomal subunit protein uS10 (102 aa).

Belongs to the universal ribosomal protein uS10 family. As to quaternary structure, part of the 30S ribosomal subunit.

Functionally, involved in the binding of tRNA to the ribosomes. In Roseiflexus sp. (strain RS-1), this protein is Small ribosomal subunit protein uS10.